A 409-amino-acid chain; its full sequence is Probable peptidoglycan glycosyltransferase FtsW (409 aa).

The next 9 membrane-spanning stretches (helical) occupy residues 42 to 62 (LFTLAMALLAFGFVMVTSASL), 72 to 92 (PFHFAIRHGIYILISLAVMLA), 108 to 128 (LLLLGLIMLLMVLVVGYEVNG), 135 to 155 (VGPITFQAAEVAKLFFCIYMA), 178 to 198 (LLFIAAVLLLMQPDFGTVVVL), 213 to 233 (LWQFFAVFITCVLALILLIIV), 303 to 323 (FLGVLAVIATVLMLVWRALII), 337 to 357 (YLAYGIGIWFSIQAFVNIGVA), and 368 to 388 (LPLVSYGGNSLIISALAVGLL).

The protein belongs to the SEDS family. FtsW subfamily.

It localises to the cell inner membrane. The enzyme catalyses [GlcNAc-(1-&gt;4)-Mur2Ac(oyl-L-Ala-gamma-D-Glu-L-Lys-D-Ala-D-Ala)](n)-di-trans,octa-cis-undecaprenyl diphosphate + beta-D-GlcNAc-(1-&gt;4)-Mur2Ac(oyl-L-Ala-gamma-D-Glu-L-Lys-D-Ala-D-Ala)-di-trans,octa-cis-undecaprenyl diphosphate = [GlcNAc-(1-&gt;4)-Mur2Ac(oyl-L-Ala-gamma-D-Glu-L-Lys-D-Ala-D-Ala)](n+1)-di-trans,octa-cis-undecaprenyl diphosphate + di-trans,octa-cis-undecaprenyl diphosphate + H(+). It participates in cell wall biogenesis; peptidoglycan biosynthesis. Functionally, peptidoglycan polymerase that is essential for cell division. The protein is Probable peptidoglycan glycosyltransferase FtsW of Idiomarina loihiensis (strain ATCC BAA-735 / DSM 15497 / L2-TR).